A 229-amino-acid chain; its full sequence is UPF0488 protein C8orf33 (229 aa).

Residues 1–16 (MAALGHLAGEAAAAPG) show a composition bias toward low complexity. The segment at 1-96 (MAALGHLAGE…GEKASEKLAP (96 aa)) is disordered. Ala-2 carries the post-translational modification N-acetylalanine. Omega-N-methylarginine is present on Arg-27. Residues 69–79 (KKQKNKKKTRN) show a composition bias toward basic residues. Ser-82 carries the phosphoserine modification.

The protein belongs to the UPF0488 family.

This is UPF0488 protein C8orf33 (C8orf33) from Homo sapiens (Human).